Consider the following 876-residue polypeptide: Leucine--tRNA ligase (876 aa).

Residues 43 to 53 carry the 'HIGH' region motif; that stretch reads PYPSGRIHMGH. Residues 632 to 636 carry the 'KMSKS' region motif; the sequence is KMSKS. Lys-635 serves as a coordination point for ATP.

It belongs to the class-I aminoacyl-tRNA synthetase family.

The protein resides in the cytoplasm. It carries out the reaction tRNA(Leu) + L-leucine + ATP = L-leucyl-tRNA(Leu) + AMP + diphosphate. In Sinorhizobium medicae (strain WSM419) (Ensifer medicae), this protein is Leucine--tRNA ligase.